The sequence spans 238 residues: Cysteine-rich venom protein natrin-2 (238 aa).

The first 19 residues, 1–19 (MIAFIVLLSLAAVLQQSSG), serve as a signal peptide directing secretion. Residues 38-164 (VDKHNALRRS…SSKYLYVCQY (127 aa)) form the SCP domain. 8 disulfide bridges follow: C75–C153, C92–C165, C148–C162, C184–C191, C187–C196, C200–C233, C209–C227, and C218–C231. The ShKT domain occupies 200–233 (CKHHNVFSNCQSLAKQNACQTEWMKSKCAASCFC).

As to expression, expressed by the venom gland.

Its subcellular location is the secreted. Functionally, inhibits carbachol-induced muscle contraction and weakly blocks muscle contraction evoked by potassium. The polypeptide is Cysteine-rich venom protein natrin-2 (Naja atra (Chinese cobra)).